We begin with the raw amino-acid sequence, 369 residues long: Phospho-N-acetylmuramoyl-pentapeptide-transferase (369 aa).

Helical transmembrane passes span 30-50 (LAIFTAQFVVVAMGSRFIRWM), 74-94 (GTPTMGGVMILAGLLVGTLLW), 97-117 (LSNPYVWAVVLVTAGYGLLGF), 136-156 (IRLALEAFIAMAAVLIIIVFA), 177-197 (YFVDLSWGYLLFGAFIIVGAA), 208-228 (GLATVPVMIAAAAYGLIAYLV), 244-264 (GVGEIAVFCGALIGSGLGFLW), 272-292 (IFMGDTGSLALGGAVGAVAVA), 297-317 (IVLAIIGGLFVAETLSVIIQV), and 346-366 (TVVIRFWIVAIMLALVGLATL).

This sequence belongs to the glycosyltransferase 4 family. MraY subfamily. Requires Mg(2+) as cofactor.

Its subcellular location is the cell inner membrane. It carries out the reaction UDP-N-acetyl-alpha-D-muramoyl-L-alanyl-gamma-D-glutamyl-meso-2,6-diaminopimeloyl-D-alanyl-D-alanine + di-trans,octa-cis-undecaprenyl phosphate = di-trans,octa-cis-undecaprenyl diphospho-N-acetyl-alpha-D-muramoyl-L-alanyl-D-glutamyl-meso-2,6-diaminopimeloyl-D-alanyl-D-alanine + UMP. The protein operates within cell wall biogenesis; peptidoglycan biosynthesis. Its function is as follows. Catalyzes the initial step of the lipid cycle reactions in the biosynthesis of the cell wall peptidoglycan: transfers peptidoglycan precursor phospho-MurNAc-pentapeptide from UDP-MurNAc-pentapeptide onto the lipid carrier undecaprenyl phosphate, yielding undecaprenyl-pyrophosphoryl-MurNAc-pentapeptide, known as lipid I. In Phenylobacterium zucineum (strain HLK1), this protein is Phospho-N-acetylmuramoyl-pentapeptide-transferase.